We begin with the raw amino-acid sequence, 252 residues long: Trans-aconitate 2-methyltransferase (252 aa).

The protein belongs to the methyltransferase superfamily. Tam family.

The protein resides in the cytoplasm. It catalyses the reaction trans-aconitate + S-adenosyl-L-methionine = (E)-3-(methoxycarbonyl)pent-2-enedioate + S-adenosyl-L-homocysteine. In terms of biological role, catalyzes the S-adenosylmethionine monomethyl esterification of trans-aconitate. The sequence is that of Trans-aconitate 2-methyltransferase from Shigella flexneri serotype 5b (strain 8401).